A 1388-amino-acid polypeptide reads, in one-letter code: DNA-directed RNA polymerase subunit beta (1388 aa).

This sequence belongs to the RNA polymerase beta chain family. In terms of assembly, the RNAP catalytic core consists of 2 alpha, 1 beta, 1 beta' and 1 omega subunit. When a sigma factor is associated with the core the holoenzyme is formed, which can initiate transcription.

The enzyme catalyses RNA(n) + a ribonucleoside 5'-triphosphate = RNA(n+1) + diphosphate. DNA-dependent RNA polymerase catalyzes the transcription of DNA into RNA using the four ribonucleoside triphosphates as substrates. The protein is DNA-directed RNA polymerase subunit beta of Xylella fastidiosa (strain 9a5c).